The chain runs to 531 residues: Light-independent protochlorophyllide reductase subunit B (531 aa).

D36 is a binding site for [4Fe-4S] cluster. D287 (proton donor) is an active-site residue. 422–423 (GL) lines the substrate pocket.

Belongs to the ChlB/BchB/BchZ family. As to quaternary structure, protochlorophyllide reductase is composed of three subunits; BchL, BchN and BchB. Forms a heterotetramer of two BchB and two BchN subunits. The cofactor is [4Fe-4S] cluster.

The enzyme catalyses chlorophyllide a + oxidized 2[4Fe-4S]-[ferredoxin] + 2 ADP + 2 phosphate = protochlorophyllide a + reduced 2[4Fe-4S]-[ferredoxin] + 2 ATP + 2 H2O. Its pathway is porphyrin-containing compound metabolism; bacteriochlorophyll biosynthesis (light-independent). In terms of biological role, component of the dark-operative protochlorophyllide reductase (DPOR) that uses Mg-ATP and reduced ferredoxin to reduce ring D of protochlorophyllide (Pchlide) to form chlorophyllide a (Chlide). This reaction is light-independent. The NB-protein (BchN-BchB) is the catalytic component of the complex. This Rhodopseudomonas palustris (strain BisA53) protein is Light-independent protochlorophyllide reductase subunit B.